A 351-amino-acid chain; its full sequence is V-type proton ATPase subunit d1 (351 aa).

The protein belongs to the V-ATPase V0D/AC39 subunit family. V-ATPase is a heteromultimeric enzyme composed of a peripheral catalytic V1 complex (components A to H) attached to an integral membrane V0 proton pore complex (components: a, c, c'', d and e).

The protein localises to the vacuole membrane. Its function is as follows. Subunit of the integral membrane V0 complex of vacuolar ATPase. Vacuolar ATPase is responsible for acidifying a variety of intracellular compartments in eukaryotic cells, thus providing most of the energy required for transport processes in the vacuolar system. This chain is V-type proton ATPase subunit d1 (VHA-d1), found in Arabidopsis thaliana (Mouse-ear cress).